We begin with the raw amino-acid sequence, 183 residues long: Putative lipoprotein LpqE (183 aa).

An N-terminal signal peptide occupies residues 1 to 30; it reads MSRFKISLPALATRVAVLGFLTLMASVLGG. Cysteine 31 is lipidated: N-palmitoyl cysteine. The S-diacylglycerol cysteine moiety is linked to residue cysteine 31.

Its subcellular location is the cell membrane. The protein is Putative lipoprotein LpqE (lpqE) of Mycobacterium leprae (strain TN).